Reading from the N-terminus, the 430-residue chain is Trigger factor (430 aa).

A PPIase FKBP-type domain is found at 157–242 (GDLVALETWS…AVEVSEPVLP (86 aa)).

It belongs to the FKBP-type PPIase family. Tig subfamily.

The protein localises to the cytoplasm. It catalyses the reaction [protein]-peptidylproline (omega=180) = [protein]-peptidylproline (omega=0). Functionally, involved in protein export. Acts as a chaperone by maintaining the newly synthesized protein in an open conformation. Functions as a peptidyl-prolyl cis-trans isomerase. The polypeptide is Trigger factor (Xanthomonas oryzae pv. oryzae (strain MAFF 311018)).